The chain runs to 358 residues: Protein-arginine kinase (358 aa).

The Phosphagen kinase C-terminal domain occupies 23–250 (VWPVTTFSLA…SKLSVAEVAA (228 aa)). ATP-binding positions include 26–30 (VTTFS), 174–178 (KSQCF), and 203–208 (SSLLLG).

It belongs to the ATP:guanido phosphotransferase family.

It catalyses the reaction L-arginyl-[protein] + ATP = N(omega)-phospho-L-arginyl-[protein] + ADP + H(+). Catalyzes the specific phosphorylation of arginine residues in proteins. The protein is Protein-arginine kinase of Chlamydia pneumoniae (Chlamydophila pneumoniae).